We begin with the raw amino-acid sequence, 778 residues long: Actin-binding LIM protein 1 (778 aa).

4 consecutive LIM zinc-binding domains span residues 97-156 (IHCH…MYGT), 156-216 (TRCH…MSSS), 224-283 (SNCA…LFGV), and 283-343 (VKCE…TKTE). Residue serine 216 is modified to Phosphoserine. Residues 339–370 (STKTEEKLRPTRTSSESIYSRPGSSIPGSPGH) form a disordered region. The segment covering 360–369 (PGSSIPGSPG) has biased composition (low complexity). At serine 367 the chain carries Phosphoserine. Phosphotyrosine occurs at positions 373 and 396. 2 disordered regions span residues 414–510 (YDDK…QAPK) and 552–597 (AAQA…EELL). 3 positions are modified to phosphoserine: serine 422, serine 426, and serine 431. A compositionally biased stretch (polar residues) spans 423–434 (LGESPRTLSPTP). Threonine 433 is subject to Phosphothreonine. At serine 435 the chain carries Phosphoserine. Phosphotyrosine is present on tyrosine 439. Residues 449 to 474 (RSTSQGSINSPVYSRHSYTPTTSRSP) are compositionally biased toward polar residues. Serine 452, serine 455, serine 458, serine 498, and serine 587 each carry phosphoserine. Residues 590–614 (EEDDEELLRRRQLQEEQLMKLNSGL) are a coiled coil. Lysine 620 is covalently cross-linked (Glycyl lysine isopeptide (Lys-Gly) (interchain with G-Cter in SUMO2)). Residues serine 640, serine 655, serine 677, and serine 706 each carry the phosphoserine modification. The 69-residue stretch at 710-778 (MLEPKIFPYE…NDMKKKAKLF (69 aa)) folds into the HP domain.

As to quaternary structure, binds F-actin. Interacts with ABRA. As to expression, detected in liver, heart, skeletal muscle, brain and retina, where it is concentrated in the inner segment and in the outer plexiform layers.

The protein resides in the cytoplasm. It is found in the cytoskeleton. May act as scaffold protein. May play a role in the development of the retina. Has been suggested to play a role in axon guidance. This Homo sapiens (Human) protein is Actin-binding LIM protein 1 (ABLIM1).